Reading from the N-terminus, the 89-residue chain is DNA/RNA-binding protein Alba (89 aa).

The protein belongs to the histone-like Alba family.

It localises to the cytoplasm. The protein localises to the chromosome. Binds double-stranded DNA tightly but without sequence specificity. Involved in DNA compaction. The polypeptide is DNA/RNA-binding protein Alba (Methanococcus maripaludis (strain DSM 14266 / JCM 13030 / NBRC 101832 / S2 / LL)).